A 212-amino-acid chain; its full sequence is Thymidine kinase (212 aa).

ATP is bound by residues 11 to 18 (SPMNAGKT), 43 to 45 (DTR), and 86 to 89 (DEAQ). Residue Glu-87 is the Proton acceptor of the active site. Phe-119 lines the substrate pocket. Residues Cys-144, Cys-147, Cys-183, and Cys-186 each coordinate Zn(2+).

This sequence belongs to the thymidine kinase family.

It carries out the reaction thymidine + ATP = dTMP + ADP + H(+). This chain is Thymidine kinase (TK), found in Encephalitozoon cuniculi (strain GB-M1) (Microsporidian parasite).